Consider the following 249-residue polypeptide: Probable amino-acid import ATP-binding protein YxeO (249 aa).

The region spanning 2–239 (ITVKNIRKAF…PKNERTKRFI (238 aa)) is the ABC transporter domain. ATP is bound at residue 34-41 (GPSGSGKS).

It belongs to the ABC transporter superfamily. As to quaternary structure, the complex is composed of two ATP-binding proteins (YxeO), two transmembrane proteins (YxeN) and a solute-binding protein (YxeM).

It is found in the cell membrane. In terms of biological role, probably part of the ABC transporter complex YxeMNO that could be involved in amino-acid import. May transport S-methylcysteine. Responsible for energy coupling to the transport system. The protein is Probable amino-acid import ATP-binding protein YxeO (yxeO) of Bacillus subtilis (strain 168).